Here is a 283-residue protein sequence, read N- to C-terminus: Putative replication protein XF_b0001 (283 aa).

In Xylella fastidiosa (strain 9a5c), this protein is Putative replication protein XF_b0001.